The primary structure comprises 162 residues: 2-C-methyl-D-erythritol 2,4-cyclodiphosphate synthase (162 aa).

A divalent metal cation contacts are provided by Asp8 and His10. Residues 8-10 (DVH) and 36-37 (HS) each bind 4-CDP-2-C-methyl-D-erythritol 2-phosphate. His44 serves as a coordination point for a divalent metal cation. Residues 58-60 (DIG), 63-67 (FPDTD), 102-108 (AQAPKMA), 134-137 (TTTE), Phe141, and Arg144 each bind 4-CDP-2-C-methyl-D-erythritol 2-phosphate.

The protein belongs to the IspF family. Homotrimer. Requires a divalent metal cation as cofactor.

It carries out the reaction 4-CDP-2-C-methyl-D-erythritol 2-phosphate = 2-C-methyl-D-erythritol 2,4-cyclic diphosphate + CMP. It functions in the pathway isoprenoid biosynthesis; isopentenyl diphosphate biosynthesis via DXP pathway; isopentenyl diphosphate from 1-deoxy-D-xylulose 5-phosphate: step 4/6. In terms of biological role, involved in the biosynthesis of isopentenyl diphosphate (IPP) and dimethylallyl diphosphate (DMAPP), two major building blocks of isoprenoid compounds. Catalyzes the conversion of 4-diphosphocytidyl-2-C-methyl-D-erythritol 2-phosphate (CDP-ME2P) to 2-C-methyl-D-erythritol 2,4-cyclodiphosphate (ME-CPP) with a corresponding release of cytidine 5-monophosphate (CMP). In Yersinia pseudotuberculosis serotype IB (strain PB1/+), this protein is 2-C-methyl-D-erythritol 2,4-cyclodiphosphate synthase.